The sequence spans 136 residues: Pleckstrin homology-like domain family A member 2 (136 aa).

Residues 12-105 (ILKEGDLEKR…WNAEITLALV (94 aa)) enclose the PH domain.

The protein belongs to the PHLDA2 family.

The protein localises to the cytoplasm. It is found in the membrane. Functionally, plays a role in regulating placenta growth. May act via its PH domain that competes with other PH domain-containing proteins, thereby preventing their binding to membrane lipids. The chain is Pleckstrin homology-like domain family A member 2 (phlda2) from Xenopus tropicalis (Western clawed frog).